Here is a 599-residue protein sequence, read N- to C-terminus: Serine hydroxymethyltransferase 6 (599 aa).

A disordered region spans residues 1-25 (MDRIAQSDLSLGFGSSHALPLPHPP). At lysine 374 the chain carries N6-(pyridoxal phosphate)lysine.

This sequence belongs to the SHMT family. As to quaternary structure, homotetramer. Pyridoxal 5'-phosphate serves as cofactor.

It is found in the cytoplasm. It carries out the reaction (6R)-5,10-methylene-5,6,7,8-tetrahydrofolate + glycine + H2O = (6S)-5,6,7,8-tetrahydrofolate + L-serine. Its pathway is one-carbon metabolism; tetrahydrofolate interconversion. Functionally, catalyzes the interconversion of serine and glycine. The chain is Serine hydroxymethyltransferase 6 (SHM6) from Arabidopsis thaliana (Mouse-ear cress).